The primary structure comprises 298 residues: Leucine-rich repeat-containing protein 55 (298 aa).

A signal peptide spans 1 to 34 (MGDTWAQLPWPGPPHSALLLVFFLLAAGVMHSDA). The LRRNT domain occupies 35–65 (GTSCPVLCTCRNQVVDCSNQRLFSVPPDLPM). Disulfide bonds link Cys-38–Cys-44 and Cys-42–Cys-51. 5 LRR repeats span residues 66–87 (DTRN…YLTC), 90–111 (ELRV…LFLH), 114–135 (RLAH…MFRE), 138–160 (GLVH…AFQG), and 163–186 (HLRD…EGLP). The 56-residue stretch at 196 to 251 (NPWVCGCTMEPLLKWLRNRIQRCTADSQLAECRGPPEVEGAPLFSLTEESFKACHL) folds into the LRRCT domain. Cystine bridges form between Cys-200/Cys-227 and Cys-202/Cys-249. A helical membrane pass occupies residues 259-279 (LFIAFVGFVVSIASVATNFLL).

Interacts with KCNMA1.

Its subcellular location is the cell membrane. In terms of biological role, auxiliary protein of the large-conductance, voltage and calcium-activated potassium channel (BK alpha). Modulates gating properties by producing a marked shift in the BK channel's voltage dependence of activation in the hyperpolarizing direction, and in the absence of calcium. The protein is Leucine-rich repeat-containing protein 55 (Lrrc55) of Mus musculus (Mouse).